The primary structure comprises 341 residues: Cytochrome c biogenesis protein CcsA (341 aa).

Helical transmembrane passes span 16–36 (LILLLTMLIYWAGAAFPGMSI), 37–57 (LPTLGTAGVAIANLSIATLLG), 68–88 (LSNLYESLFFLAWGVTAVHLI), 97–117 (LVGVVTTPVAMGITAFAALSL), 142–162 (VMMLSYATLMVGAVLAIAFLI), 249–269 (IIGLGFPLLTIGIIAGAVWAN), 276–296 (WSWDPKETWALITWLVFAAYL), and 310–330 (AILAASGFIVVWVCYLGVNLL).

The protein belongs to the CcmF/CycK/Ccl1/NrfE/CcsA family. In terms of assembly, may interact with ccs1.

It is found in the cellular thylakoid membrane. Functionally, required during biogenesis of c-type cytochromes (cytochrome c6 and cytochrome f) at the step of heme attachment. This Rippkaea orientalis (strain PCC 8801 / RF-1) (Cyanothece sp. (strain PCC 8801)) protein is Cytochrome c biogenesis protein CcsA.